The following is an 829-amino-acid chain: Probable receptor-like protein kinase At5g59700 (829 aa).

The N-terminal stretch at 1–24 (MGGEKFGFLIWILSIPCLIFLCYG) is a signal peptide. Topologically, residues 25–406 (YVPVDNYLIN…SSTTKKNVGM (382 aa)) are extracellular. 4 N-linked (GlcNAc...) asparagine glycosylation sites follow: Asn-40, Asn-216, Asn-279, and Asn-380. Residues 407–427 (IIGLTIGSLLALVVLGGFFVL) traverse the membrane as a helical segment. Residues 428 to 829 (YKKRGRDQDG…FSQLIKSEGR (402 aa)) are Cytoplasmic-facing. One can recognise a Protein kinase domain in the interval 482–755 (FDENRAIGVG…GDVLWNLEYA (274 aa)). ATP is bound by residues 488 to 496 (IGVGGFGKV) and Lys-510. Catalysis depends on Asp-606, which acts as the Proton acceptor.

The protein belongs to the protein kinase superfamily. Ser/Thr protein kinase family.

It is found in the cell membrane. The chain is Probable receptor-like protein kinase At5g59700 from Arabidopsis thaliana (Mouse-ear cress).